We begin with the raw amino-acid sequence, 482 residues long: Vanillin dehydrogenase (482 aa).

NAD(+) is bound at residue 228–233 (GSTHVG). Active-site residues include Glu-250 and Cys-284.

It belongs to the aldehyde dehydrogenase family.

The enzyme catalyses vanillin + NAD(+) + H2O = vanillate + NADH + 2 H(+). Its function is as follows. Catalyzes the NAD-dependent oxidation of vanillin to vanillic acid. In Pseudomonas fluorescens, this protein is Vanillin dehydrogenase (vdh).